The primary structure comprises 411 residues: Dual-specificity RNA methyltransferase RlmN (411 aa).

Glu125 functions as the Proton acceptor in the catalytic mechanism. In terms of domain architecture, Radical SAM core spans 131–380 (EEGRGTLCIS…IRTPRGRDIL (250 aa)). A disulfide bond links Cys138 and Cys383. Cys145, Cys149, and Cys152 together coordinate [4Fe-4S] cluster. S-adenosyl-L-methionine-binding positions include 209–210 (GE), Ser241, 263–265 (SLH), and Asn340. The active-site S-methylcysteine intermediate is the Cys383.

This sequence belongs to the radical SAM superfamily. RlmN family. [4Fe-4S] cluster is required as a cofactor.

It is found in the cytoplasm. The catalysed reaction is adenosine(2503) in 23S rRNA + 2 reduced [2Fe-2S]-[ferredoxin] + 2 S-adenosyl-L-methionine = 2-methyladenosine(2503) in 23S rRNA + 5'-deoxyadenosine + L-methionine + 2 oxidized [2Fe-2S]-[ferredoxin] + S-adenosyl-L-homocysteine. The enzyme catalyses adenosine(37) in tRNA + 2 reduced [2Fe-2S]-[ferredoxin] + 2 S-adenosyl-L-methionine = 2-methyladenosine(37) in tRNA + 5'-deoxyadenosine + L-methionine + 2 oxidized [2Fe-2S]-[ferredoxin] + S-adenosyl-L-homocysteine. Specifically methylates position 2 of adenine 2503 in 23S rRNA and position 2 of adenine 37 in tRNAs. m2A2503 modification seems to play a crucial role in the proofreading step occurring at the peptidyl transferase center and thus would serve to optimize ribosomal fidelity. In Brucella suis biovar 1 (strain 1330), this protein is Dual-specificity RNA methyltransferase RlmN.